The sequence spans 466 residues: Reticulophagy regulator 3 (466 aa).

Topologically, residues 1 to 80 (MEEAEGVAAA…WCLGLNAAFW (80 aa)) are cytoplasmic. S26 is subject to Phosphoserine. A helical membrane pass occupies residues 81–101 (FFALTSLRFVFLLAFSLMIIV). Residues 102–168 (CIDQWKNKIW…LLFKKQNPGK (67 aa)) are Lumenal-facing. Residues 169-187 (FCLLSCGVLTFLAMLGRYI) traverse the membrane as a helical segment. The Cytoplasmic segment spans residues 188 to 192 (PGLLL). Residues 193–211 (SYLMLVIIMMWPLAVYHRL) traverse the membrane as a helical segment. The Lumenal segment spans residues 212–381 (WDRAYVRLKP…ASRNEAALPE (170 aa)). Residues 244–263 (RRRALHSERATDSHSDSEEE) form a disordered region. Basic and acidic residues predominate over residues 248–259 (LHSERATDSHSD). Position 254 is a phosphothreonine (T254). Phosphoserine is present on residues S258 and S260. Phosphothreonine is present on T283. Phosphoserine is present on residues S285, S288, S293, and S303. Residues 285–335 (SEHSDAEVSCTENGTFNLSRGQTPLTEGSEDLDGHSDPEESFARDLPDFPS) form a disordered region. Over residues 294 to 310 (CTENGTFNLSRGQTPLT) the composition is skewed to polar residues. Phosphothreonine occurs at positions 307 and 310. S313, S320, and S360 each carry phosphoserine. Residues 316 to 331 (LDGHSDPEESFARDLP) show a composition bias toward basic and acidic residues. The chain crosses the membrane as a helical span at residues 382 to 401 (LLLSSLPGGSNLTSNLASLV). Over 402-466 (SQGMIQLALS…QLDPASSRSH (65 aa)) the chain is Cytoplasmic. Residues 412 to 444 (EASQTDPSGPPPRRATRGFLRAPSSDLDTDAEG) are disordered. At T440 the chain carries Phosphothreonine. The LIR motif motif lies at 445 to 450 (DDFELL).

This sequence belongs to the RETREG family. Interacts with ATG8 family modifier proteins MAP1LC3A, MAP1LC3B, GABARAPL1 and GABARAPL2. Also interacts with ATG8 family modifier protein GABARAP. Interacts with CANX. Interacts with RTN4 isoform B. As to expression, widely expressed with highest levels in brain, lung, liver, muscle and spleen (protein level). Mainly expressed in the central nervous system and in parenchymatous organs including liver, lung and kidney.

The protein localises to the endoplasmic reticulum membrane. Endoplasmic reticulum (ER)-anchored autophagy regulator which exists in an inactive state under basal conditions but is activated following cellular stress. When activated, induces ER fragmentation and mediates ER delivery into lysosomes through sequestration into autophagosomes via interaction with ATG8 family proteins. Promotes ER membrane curvature and ER tubulation required for subsequent ER fragmentation and engulfment into autophagosomes. Required for collagen quality control in a LIR motif-dependent manner. Mediates NRF1-enhanced neurite outgrowth. This chain is Reticulophagy regulator 3 (Retreg3), found in Mus musculus (Mouse).